The primary structure comprises 173 residues: NADH-ubiquinone oxidoreductase chain 6 (173 aa).

5 helical membrane-spanning segments follow: residues 1–21 (MTYLVSLLLMALIVGLIAVAS), 24–44 (APYFAALGLVVAAGVGCGVLV), 53–73 (LVLFLIYLGGMLVVFAYSAAL), 86–106 (SVVGYVMIYLLGVGLMVGVFW), and 139–159 (YGGGMLVICAWVLLLTLFVVL).

It belongs to the complex I subunit 6 family.

It localises to the mitochondrion membrane. The enzyme catalyses a ubiquinone + NADH + 5 H(+)(in) = a ubiquinol + NAD(+) + 4 H(+)(out). In terms of biological role, core subunit of the mitochondrial membrane respiratory chain NADH dehydrogenase (Complex I) that is believed to belong to the minimal assembly required for catalysis. Complex I functions in the transfer of electrons from NADH to the respiratory chain. The immediate electron acceptor for the enzyme is believed to be ubiquinone. The polypeptide is NADH-ubiquinone oxidoreductase chain 6 (MT-ND6) (Formosania lacustris (Oriental stream loach)).